The following is a 135-amino-acid chain: Small ribosomal subunit protein eS6 (135 aa).

This sequence belongs to the eukaryotic ribosomal protein eS6 family.

This chain is Small ribosomal subunit protein eS6, found in Halorubrum lacusprofundi (strain ATCC 49239 / DSM 5036 / JCM 8891 / ACAM 34).